The sequence spans 210 residues: 3-hexulose-6-phosphate synthase (210 aa).

This sequence belongs to the HPS/KGPDC family. HPS subfamily.

The enzyme catalyses D-ribulose 5-phosphate + formaldehyde = D-arabino-hex-3-ulose 6-phosphate. Its pathway is one-carbon metabolism; formaldehyde assimilation via RuMP pathway; D-fructose 6-phosphate from D-ribulose 5-phosphate and formaldehyde: step 1/2. Catalyzes the condensation of ribulose 5-phosphate with formaldehyde to form 3-hexulose 6-phosphate. This Staphylococcus aureus (strain MRSA252) protein is 3-hexulose-6-phosphate synthase.